We begin with the raw amino-acid sequence, 932 residues long: Envelope glycoprotein B (932 aa).

Positions 1–12 (MAARGGAERAAG) are enriched in low complexity. Disordered stretches follow at residues 1–25 (MAARGGAERAAGAGDGRRGQRRHLR) and 67–105 (GRPATTPPAPPPEEAASPAPPASPSPPGPDGDDAASPDN). The N-terminal stretch at 1 to 62 (MAARGGAERA…LWATWALLLA (62 aa)) is a signal peptide. The Virion surface portion of the chain corresponds to 63 to 806 (APAAGRPATT…SGIASFIANP (744 aa)). Pro residues predominate over residues 71 to 95 (TTPPAPPPEEAASPAPPASPSPPGP). Residues Asn-105 and Asn-153 are each glycosylated (N-linked (GlcNAc...) asparagine; by host). 5 disulfide bridges follow: Cys-128-Cys-607, Cys-145-Cys-563, Cys-218-Cys-282, Cys-375-Cys-423, and Cys-628-Cys-665. Involved in fusion and/or binding to host membrane regions lie at residues 184–190 (TWAGSTY) and 269–276 (GSAGLYRT). Asn-441 and Asn-483 each carry an N-linked (GlcNAc...) asparagine; by host glycan. Residues 492 to 527 (AAAPKPGPRRARRAAPSAPGGPGAANGPAGDGDAGG) are disordered. Gly residues predominate over residues 511–526 (GGPGAANGPAGDGDAG). N-linked (GlcNAc...) asparagine; by host glycosylation is found at Asn-640 and Asn-706. Hydrophobic membrane proximal region regions lie at residues 751–804 (IDRV…SFIA) and 784–804 (VVLGAAGAALSTVSGIASFIA). The chain crosses the membrane as a helical span at residues 807 to 827 (FGALATGLLVLAGLVAAFLAY). The Intravirion segment spans residues 828–932 (RYISRLRSNP…QLPMADVGGA (105 aa)). The Golgi targeting motif lies at 880–883 (YMSL). The short motif at 921–924 (YQQL) is the Internalization motif element.

This sequence belongs to the herpesviridae glycoprotein B family. In terms of assembly, homotrimer; disulfide-linked. Binds to heparan sulfate proteoglycans. Interacts with gH/gL heterodimer. A proteolytic cleavage by host furin generates two subunits that remain linked by disulfide bonds.

It is found in the virion membrane. The protein localises to the host cell membrane. It localises to the host endosome membrane. The protein resides in the host Golgi apparatus membrane. Functionally, envelope glycoprotein that forms spikes at the surface of virion envelope. Essential for the initial attachment to heparan sulfate moieties of the host cell surface proteoglycans. Involved in fusion of viral and cellular membranes leading to virus entry into the host cell. Following initial binding to its host receptors, membrane fusion is mediated by the fusion machinery composed at least of gB and the heterodimer gH/gL. May be involved in the fusion between the virion envelope and the outer nuclear membrane during virion egress. This Bos taurus (Bovine) protein is Envelope glycoprotein B.